The following is a 70-amino-acid chain: Large ribosomal subunit protein bL31 (70 aa).

Zn(2+)-binding residues include cysteine 16, cysteine 18, cysteine 37, and cysteine 40.

The protein belongs to the bacterial ribosomal protein bL31 family. Type A subfamily. Part of the 50S ribosomal subunit. Requires Zn(2+) as cofactor.

In terms of biological role, binds the 23S rRNA. This chain is Large ribosomal subunit protein bL31, found in Cronobacter sakazakii (strain ATCC BAA-894) (Enterobacter sakazakii).